A 212-amino-acid polypeptide reads, in one-letter code: Large ribosomal subunit protein uL3 (212 aa).

Gln153 carries the N5-methylglutamine modification.

Belongs to the universal ribosomal protein uL3 family. In terms of assembly, part of the 50S ribosomal subunit. Forms a cluster with proteins L14 and L19. Methylated by PrmB.

Its function is as follows. One of the primary rRNA binding proteins, it binds directly near the 3'-end of the 23S rRNA, where it nucleates assembly of the 50S subunit. This is Large ribosomal subunit protein uL3 from Shewanella frigidimarina (strain NCIMB 400).